Consider the following 164-residue polypeptide: Large ribosomal subunit protein eL24 (164 aa).

Disordered stretches follow at residues 63 to 82 (KDAA…KPYS) and 117 to 164 (ERIK…GGKA). A compositionally biased stretch (basic residues) spans 71–81 (KKRRRATKKPY). A compositionally biased stretch (basic and acidic residues) spans 117–133 (ERIKKTKDEKKAKKAEV).

This sequence belongs to the eukaryotic ribosomal protein eL24 family.

It is found in the cytoplasm. The polypeptide is Large ribosomal subunit protein eL24 (RPL24) (Cicer arietinum (Chickpea)).